The sequence spans 281 residues: 2-dehydro-3-deoxyphosphooctonate aldolase (281 aa).

This sequence belongs to the KdsA family.

The protein localises to the cytoplasm. It carries out the reaction D-arabinose 5-phosphate + phosphoenolpyruvate + H2O = 3-deoxy-alpha-D-manno-2-octulosonate-8-phosphate + phosphate. It functions in the pathway carbohydrate biosynthesis; 3-deoxy-D-manno-octulosonate biosynthesis; 3-deoxy-D-manno-octulosonate from D-ribulose 5-phosphate: step 2/3. Its pathway is bacterial outer membrane biogenesis; lipopolysaccharide biosynthesis. The chain is 2-dehydro-3-deoxyphosphooctonate aldolase from Janthinobacterium sp. (strain Marseille) (Minibacterium massiliensis).